Reading from the N-terminus, the 448-residue chain is Ribosome biogenesis protein YTM1 (448 aa).

The segment at 5–86 (TSNQAVVFST…EETLEIEYIE (82 aa)) is ubiquitin-like (UBL) domain. WD repeat units lie at residues 98-136 (PHES…TLDA), 191-230 (LHTA…KHEV), 271-309 (SHIG…CTRT), 312-351 (ASEK…ALSA), 357-397 (LHPA…AAIS), and 403-439 (DGTK…ETQG). Positions 225-261 (PPKHEVPEPTITAADQRTKKRRKVDPSSGDSSSPTAI) are disordered.

This sequence belongs to the WD repeat WDR12/YTM1 family. In terms of assembly, component of the NOP7 complex, composed of ERB1, NOP7 and YTM1. The complex is held together by ERB1, which interacts with NOP7 via its N-terminal domain and with YTM1 via a high-affinity interaction between the seven-bladed beta-propeller domains of the 2 proteins. The NOP7 complex associates with the 66S pre-ribosome. Interacts (via UBL domain) with MDN1 (via VWFA/MIDAS domain).

It localises to the nucleus. Its subcellular location is the nucleolus. It is found in the nucleoplasm. Its function is as follows. Component of the NOP7 complex, which is required for maturation of the 25S and 5.8S ribosomal RNAs and formation of the 60S ribosome. This is Ribosome biogenesis protein YTM1 from Coprinopsis cinerea (strain Okayama-7 / 130 / ATCC MYA-4618 / FGSC 9003) (Inky cap fungus).